An 899-amino-acid polypeptide reads, in one-letter code: Auxin response factor 25 (899 aa).

Residues 1–20 are disordered; the sequence is MKLSPPASADMPQALPENDG. The TF-B3 DNA-binding region spans 132–234; the sequence is FCKTLTASDT…QLLLGIRRAN (103 aa). Residues 546–564 are compositionally biased toward low complexity; the sequence is RQHVLQEQSSQEMQQQLPS. The interval 546-586 is disordered; the sequence is RQHVLQEQSSQEMQQQLPSSDHHVADVASESGSAPQAQSSL. A compositionally biased stretch (polar residues) spans 575-586; the sequence is ESGSAPQAQSSL. In terms of domain architecture, PB1 spans 766-850; sequence ATFVKVYKSG…WCIKILSPQE (85 aa).

Belongs to the ARF family. In terms of assembly, homodimers and heterodimers. In terms of tissue distribution, expressed in roots, culms, leaves and young panicles.

The protein resides in the nucleus. In terms of biological role, auxin response factors (ARFs) are transcriptional factors that bind specifically to the DNA sequence 5'-TGTCTC-3' found in the auxin-responsive promoter elements (AuxREs). The chain is Auxin response factor 25 (ARF25) from Oryza sativa subsp. japonica (Rice).